The primary structure comprises 560 residues: Nucleoprotein (560 aa).

The binding site for the cap structure m7GTP stretch occupies residues 54–236 (LRKAKRSDAD…ITRDESAVNI (183 aa)). Residues 323–332 (GRSWDNTSVD) show a composition bias toward polar residues. Residues 323–349 (GRSWDNTSVDLNPKPDPGPRAPEKNGQ) are disordered. 2 residues coordinate Mn(2+): aspartate 380 and glutamate 382. Residues glutamate 390, cysteine 497, histidine 500, and cysteine 521 each coordinate Zn(2+). Aspartate 525 contacts Mn(2+).

Belongs to the arenaviridae nucleocapsid protein family. As to quaternary structure, homomultimerizes to form the nucleocapsid. Binds to viral genomic RNA. Interacts with glycoprotein G2. Interacts with protein Z; this interaction probably directs the encapsidated genome to budding sites. Interacts with protein L; this interaction does not interfere with Z-L interaction. Interacts with host IKBKE (via Protein kinase domain); the interaction inhibits IKBKE kinase activity.

Its subcellular location is the virion. It localises to the host cytoplasm. In terms of biological role, encapsidates the genome, protecting it from nucleases. The encapsidated genomic RNA is termed the nucleocapsid (NC). Serves as template for viral transcription and replication. The increased presence of protein N in host cell does not seem to trigger the switch from transcription to replication as observed in other negative strain RNA viruses. Through the interaction with host IKBKE, strongly inhibits the phosphorylation and nuclear translocation of host IRF3, a protein involved in interferon activation pathway, leading to the inhibition of interferon-beta and IRF3-dependent promoters activation. Also encodes a functional 3'-5' exoribonuclease that degrades preferentially dsRNA substrates and thereby participates in the suppression of interferon induction. The protein is Nucleoprotein of Cupixi mammarenavirus (isolate Rat/Brasil/BeAn 119303/1970) (CPXV).